Reading from the N-terminus, the 215-residue chain is MKSLHIKICGLTSLVDARAAVAAGADAIGLVFYAPSPRAVSVAQARAIALGIGPFTVATGLFVDADPGFVQSVLAEVPLQLLQFHGSESRAYCESFQRPYMKAIRMRPELDVVAAMAEYPSASAILLDAYRPGVPGGTGETFDWGRVPQHTSRPLVLAGGLAPENVANAISATRVYGVDVSGGVESAPGVKDHEKIHRFITCALQASAQLNSKGD.

This sequence belongs to the TrpF family.

It catalyses the reaction N-(5-phospho-beta-D-ribosyl)anthranilate = 1-(2-carboxyphenylamino)-1-deoxy-D-ribulose 5-phosphate. It functions in the pathway amino-acid biosynthesis; L-tryptophan biosynthesis; L-tryptophan from chorismate: step 3/5. This chain is N-(5'-phosphoribosyl)anthranilate isomerase, found in Cellvibrio japonicus (strain Ueda107) (Pseudomonas fluorescens subsp. cellulosa).